The chain runs to 299 residues: Aliphatic sulfonates import ATP-binding protein SsuB (299 aa).

The ABC transporter domain occupies Leu-36–Ile-257. Gly-68–Ser-75 is a binding site for ATP.

Belongs to the ABC transporter superfamily. Aliphatic sulfonates importer (TC 3.A.1.17.2) family. The complex is composed of two ATP-binding proteins (SsuB), two transmembrane proteins (SsuC) and a solute-binding protein (SsuA).

Its subcellular location is the cell inner membrane. The enzyme catalyses ATP + H2O + aliphatic sulfonate-[sulfonate-binding protein]Side 1 = ADP + phosphate + aliphatic sulfonateSide 2 + [sulfonate-binding protein]Side 1.. Part of the ABC transporter complex SsuABC involved in aliphatic sulfonates import. Responsible for energy coupling to the transport system. This Cupriavidus pinatubonensis (strain JMP 134 / LMG 1197) (Cupriavidus necator (strain JMP 134)) protein is Aliphatic sulfonates import ATP-binding protein SsuB.